Consider the following 342-residue polypeptide: Tetraacyldisaccharide 4'-kinase (342 aa).

68 to 75 (TVGGTGKT) provides a ligand contact to ATP.

The protein belongs to the LpxK family.

It carries out the reaction a lipid A disaccharide + ATP = a lipid IVA + ADP + H(+). It participates in glycolipid biosynthesis; lipid IV(A) biosynthesis; lipid IV(A) from (3R)-3-hydroxytetradecanoyl-[acyl-carrier-protein] and UDP-N-acetyl-alpha-D-glucosamine: step 6/6. In terms of biological role, transfers the gamma-phosphate of ATP to the 4'-position of a tetraacyldisaccharide 1-phosphate intermediate (termed DS-1-P) to form tetraacyldisaccharide 1,4'-bis-phosphate (lipid IVA). In Burkholderia ambifaria (strain ATCC BAA-244 / DSM 16087 / CCUG 44356 / LMG 19182 / AMMD) (Burkholderia cepacia (strain AMMD)), this protein is Tetraacyldisaccharide 4'-kinase.